The following is a 135-amino-acid chain: Protein NrdI (135 aa).

The protein belongs to the NrdI family.

Its function is as follows. Probably involved in ribonucleotide reductase function. The chain is Protein NrdI from Rhizobium johnstonii (strain DSM 114642 / LMG 32736 / 3841) (Rhizobium leguminosarum bv. viciae).